Here is a 344-residue protein sequence, read N- to C-terminus: L-rhamnose-proton symporter (344 aa).

The next 10 membrane-spanning stretches (helical) occupy residues 4-24 (AITMGIFWHLIGAASAACFYA), 38-58 (WSVGGIVSWIILPWAISALLL), 68-88 (FSLSTLLPVFLFGAMWGIGNI), 101-121 (MGIGIAIGITLIVGTLMTPII), 137-157 (TLLGVLVALIGVGIVTRAGQL), 175-195 (LVLAVMCGIFSAGMSFAMNAA), 214-234 (LPSYVVIMGGGAIINLGFCFI), 259-279 (VLLSALGGLMWYLQFFFYAWG), 290-310 (ISWMLHMSFYVLCGGIVGLVL), and 323-343 (VLSLGCVVIIVAANIVGIGMA).

This sequence belongs to the L-rhamnose transporter (TC 2.A.7.6) family.

The protein resides in the cell inner membrane. The enzyme catalyses L-rhamnopyranose(in) + H(+)(in) = L-rhamnopyranose(out) + H(+)(out). In terms of biological role, uptake of L-rhamnose across the cytoplasmic membrane with the concomitant transport of protons into the cell (symport system). This is L-rhamnose-proton symporter from Escherichia coli O127:H6 (strain E2348/69 / EPEC).